Reading from the N-terminus, the 100-residue chain is Putative insulin-like peptide beta-type 6 (100 aa).

The signal sequence occupies residues 1 to 18 (MHSIVALMLIGTILPIAA). 4 disulfides stabilise this stretch: Cys54-Cys83, Cys66-Cys96, Cys70-Cys97, and Cys82-Cys87.

It belongs to the insulin family.

Its subcellular location is the secreted. The polypeptide is Putative insulin-like peptide beta-type 6 (ins-5) (Caenorhabditis elegans).